The chain runs to 2481 residues: Tetratricopeptide repeat protein 28 (2481 aa).

Residue Met-1 is modified to N-acetylmethionine. Residues 1-14 (MEQSPPPAPEPTQG) are compositionally biased toward pro residues. Residues 1–48 (MEQSPPPAPEPTQGPTPARSRRRREPESPPASAPIPLFGADTIGQRSP) are disordered. Ser-28 is subject to Phosphoserine. TPR repeat units follow at residues 58-91 (FVEK…DPQN), 93-125 (ILYS…NPKW), 126-159 (PKAY…DPKS), 196-229 (FVVV…GTCS), 234-267 (GSVF…AKTL), 274-307 (CRAH…AMKL), 314-347 (SSAL…AKQS), 354-387 (AREL…AKDL), 394-427 (ARAY…AQEL), 434-467 (MRAY…AEDL), 474-507 (GRAS…AQEL), 514-547 (GRAY…SMEV), 554-587 (ASTH…AREL), 594-627 (ARAL…APDL), 634-667 (GKVC…AKDL), 674-707 (AKAY…AQSL), 714-747 (FRAL…AHQV), 754-787 (ASAY…YQEL), 794-827 (CRAH…GQKL), 834-867 (AQVY…LQQL), 877-910 (GRAY…AQSL), 917-950 (AKAY…AHEL), 957-990 (AQAY…ARDM), 997-1030 (SDAA…AEET), 1037-1070 (GRAY…AAQM), 1077-1110 (TVSY…AEQL), 1117-1150 (AKIR…FETI), and 1169-1202 (TSSY…AFAD). Ser-1590 carries the post-translational modification Phosphoserine. 3 disordered regions span residues 2004–2055 (FVSK…DEEE), 2075–2161 (NTCF…DPQE), and 2176–2339 (AVER…PADA). Polar residues-rich tracts occupy residues 2029–2043 (AYLQ…QLPP) and 2096–2122 (SVSS…NSPF). Residue Ser-2104 is modified to Phosphoserine. Positions 2130–2146 (SSDTGESDQSSTETDST) are enriched in low complexity. Basic and acidic residues predominate over residues 2149–2159 (SQEESNPKLDP). Residues 2183 to 2214 (SGGQVSKSNNPEDGVQAPSSTAVFRASETSAF) are compositionally biased toward polar residues. Phosphoserine is present on residues Ser-2224 and Ser-2251. Polar residues predominate over residues 2238–2282 (RSSSLPKVSSGYSSPTTSEMSIKDSPSQHSGRPSPGCDSQTSQLD). A compositionally biased stretch (low complexity) spans 2307–2339 (SPSSGHQSPAGSAPSPALSYSSAGSARSSPADA). Phosphoserine is present on residues Ser-2393 and Ser-2398. Positions 2420–2467 (QHDGAPPKAPPNGHWRTETTSLGSLPLPAGPPATAPARPLRLPSGNGY) are disordered.

Interacts with AURKB. In terms of tissue distribution, widely expressed in fetal tissues. In adult tissues, expressed in testis and ovary and, at much lower levels, in kidney and pancreas.

It is found in the cytoplasm. It localises to the cytoskeleton. The protein resides in the microtubule organizing center. Its subcellular location is the centrosome. The protein localises to the spindle. It is found in the spindle pole. It localises to the midbody. Functionally, during mitosis, may be involved in the condensation of spindle midzone microtubules, leading to the formation of midbody. The sequence is that of Tetratricopeptide repeat protein 28 (TTC28) from Homo sapiens (Human).